Here is an 859-residue protein sequence, read N- to C-terminus: MCAGFYVAVHPWLEAQSLHKVGHTGNLAARLHDGSYTTCFTDEWKYCFTLETSTKKDAQKIEAGVLYCAQFFRVKNKELVCLLPEKIKQLAEDVANCLDISYTLCDSPTYEMNDSTIVVEPSLPSDPLISKEKLRHLVITPVEDEEHFADDVLFFSTDETRTAIEDRLYQKEAANMGYQELRRSGRAILQMACRCGKTRVAYLILSNYLQGKVLYLVPGLSLLRQTLEKLYQYGISLKNVLLVGSDQTRIVLNHDNIEMTTNPVFIAKRIREAPSLLVIATYQSSTLLVDDFDLIISDECHRICGEWETRPFTHVLLNFKKGHRLFLTATPRYDTPLSMKNRELFGGVAFRYYLREGIEAGYVNDFELQMVAAPKLAHQPSNREETTKQIIVKQIIMALAYLKTNIPAPKMLVFTRDIKQARELYAELVDQGVYALIAHSTLPRQVILKTFTEFCSSKEPVILLNCRLFQEGVEVPELNAVFFAAPRHSPRDIIQSICRPLNKQVQKPHATIFLPLEVNTENVCLDRFSSIIPFADALASEDPRFYEHLLNPSEVAYPINWIGAHGSVSELLQLARHAIRYGTQGKIDRLTRSERLPWKAAFAELKRTVEICCRYPKINDGFHFGGATLRFDTWYKWVIKSYLQYKNKEPSSLEPYQVSDLESLQDWTTRGVGGPYPWEESMAFLETWLAQNKGELVAIDIHQGGWIGLDATPMERLSGVLTTVSQRDGRSYGKNKKLRPKKGFMIPPQQAEDLDRIFGKHNLKWRKDRVNGFLKEDEHGNYTGEPTCIQEAYRTFKEYVKTNPEYIEKYWPGYAKGKHKHQELPHIWESGLAPPRYKAFKDGNKQLIQRSPKKKDIKN.

A Helicase ATP-binding domain is found at 178–349; that stretch reads YQELRRSGRA…KNRELFGGVA (172 aa). 191 to 198 serves as a coordination point for ATP; sequence MACRCGKT. The DEAH box motif lies at 298–301; it reads DECH. The region spanning 394–553 is the Helicase C-terminal domain; sequence QIIMALAYLK…RFYEHLLNPS (160 aa).

This sequence belongs to the asfivirus helicase A859L family.

This is Probable helicase A859L from Ornithodoros (relapsing fever ticks).